A 721-amino-acid polypeptide reads, in one-letter code: Solute carrier family 12 member 8 (721 aa).

11 helical membrane passes run 53–73 (FGTW…VVLF), 84–104 (GVLL…VTVL), 115–135 (IGSG…VGGT), 136–156 (IGVL…TGFA), 174–194 (ISLA…KWII), 196–216 (LQLL…IGSF), 247–267 (FFTV…GFNM), 283–303 (LAAI…LGAI), 321–341 (LVGG…CMGG), 374–394 (PVAA…IGQV), and 397–417 (LAPI…YSYF). Disordered regions lie at residues 473 to 505 (PNHT…KQTL) and 533 to 580 (NESQ…STVA). Residues 553-565 (TESDEPDSEEDVD) show a composition bias toward acidic residues. 2 consecutive transmembrane segments (helical) span residues 606 to 626 (FLGA…YALV) and 628 to 648 (LGVA…LNPG).

This sequence belongs to the SLC12A transporter family.

It localises to the membrane. Cation/chloride cotransporter. This chain is Solute carrier family 12 member 8 (slc12a8), found in Xenopus laevis (African clawed frog).